We begin with the raw amino-acid sequence, 1418 residues long: Alpha-latrotoxin-Lhe1a (1418 aa).

Residues 1-20 (MIFVGETMERANHSLVRLRR) form the signal peptide. The interval 17 to 20 (RLRR) is furin-like endopeptidase recognition region. The segment at 238–257 (VLYALLYGTQTYISVMFFLL) is helix H8 is the probable transmembrane region of the tetrameric pore inserted in the target cell membrane. The cysteines at positions 413 and 1066 are disulfide-linked. ANK repeat units lie at residues 458–489 (LYNAASNPDSAVGFKEFTKLNYDGANIRATFD), 490–521 (QGRTIFHAVAKSGNDKILFGLTFLVKSTELNQ), 525–554 (KGYTPIHVAADSGNAGIVNLLIQRGVSINS), 559–589 (FLQTPLHLAAQRGFVNTFQRLMESSEININE), 593–622 (DGFTPLHYAVRGGERILEAFMNQIGIDVNA), 626–656 (KGLTPFHLAIIKNDWQVASTLLRNKKVDINA), 660–690 (NNMTALHYAAILGYLETTKQLINLKEINANV), 695–723 (GLLSALHYAILYKHDDVASFLLRSSNVNV), 729–758 (GGITPLHLAVMQGRKQVLSLMFNIGVNIEQ), 762–791 (EKYTPLHLAAMSKYPELIQILLDQDSNFEA), 795–824 (SGATPLHLATFKGKSQAALILLNNEVNWRD), 828–857 (NGQMPIHGAATTGLLDVAQAIISIDATVLD), 862–891 (NSDTPLNLAAQNSHIDAVKYFIDQGADINT), 895–924 (NGHAPLLAFSKKGNLDMVKYLFDKNANVYI), 928–957 (NGMNFFYYAVRNGHLNIIKYAMSEKDKFEW), 971–1003 (EECAISHFAVCDAVQFDKIEIVKFFIGTLGNFN), 1004–1033 (ICGPLHQAARYGHLHIVKYLVEEEVLSVDG), 1035–1064 (KTDTPLCYASENGHLAVVQYLVSNGAKVNH), 1068–1097 (NGMTAIDKAITKNHLQVVQFLAANGVDFRR), 1101–1131 (RGATPFLTAVAENAFDIAEYLIREKRQDINI), 1137–1166 (DKETALHLAVYYKNLQMIKLLVKYGIDVTI), and 1170–1199 (YDKTVLDIATDAKFSNIVKYLKKNSGKFRR). The 4C4.1 epitope stretch occupies residues 1026–1032 (EEVLSVD). The tract at residues 1196–1199 (KFRR) is furin-like endopeptidase recognition region. Positions 1200–1418 (EYKSSYGEHS…SEKKIQKISI (219 aa)) are excised as a propeptide.

Belongs to the cationic peptide 01 (latrotoxin) family. 03 (alpha-latrotoxin) subfamily. In terms of assembly, homotetramer in membranes. Processed by furin-like proteases at both the N- and C-termini. In terms of tissue distribution, expressed in venom gland, cephalothorax, and abdomen tissues from both males and females.

It is found in the secreted. It localises to the target cell membrane. Functionally, presynaptic neurotoxin that causes massive release of neurotransmitters from vertebrate (but not invertebrate) nerve terminals and endocrine cells via a complex mechanism involving activation of receptor(s) and toxin insertion into the plasma membrane with subsequent pore formation. Binds to neurexin-1-alpha (NRXN1) in a calcium dependent manner, adhesion G protein-coupled receptor L1 (ADGRL1, also termed latrophilin-1 and calcium-independent receptor of latrotoxin (CIRL)), and receptor-type tyrosine-protein phosphatase S (PTPRS), also termed PTP sigma. NRXN1 and PTPRS are suggested to provide a platform for binding and subsequent pore formation events. In contrast, binding to ADGRL1 does not involve oligomerization and channel formation, but direct downstream stimulation of the synaptic fusion machinery. The protein is Alpha-latrotoxin-Lhe1a of Latrodectus hesperus (Western black widow spider).